The sequence spans 149 residues: Probable glycine cleavage system H protein 2 (149 aa).

The region spanning 32–114 (IAVVGITDLA…YGQGWIAKIK (83 aa)) is the Lipoyl-binding domain. Lys-73 carries the N6-lipoyllysine modification.

Belongs to the GcvH family. The glycine cleavage system is composed of four proteins: P, T, L and H. The cofactor is (R)-lipoate.

In terms of biological role, the glycine cleavage system catalyzes the degradation of glycine. The H protein shuttles the methylamine group of glycine from the P protein to the T protein. This chain is Probable glycine cleavage system H protein 2, found in Sulfolobus acidocaldarius (strain ATCC 33909 / DSM 639 / JCM 8929 / NBRC 15157 / NCIMB 11770).